The following is a 313-amino-acid chain: Arabinooligosaccharides transport system permease protein AraP (313 aa).

Transmembrane regions (helical) follow at residues 39-59 (FVLS…IMSF), 91-111 (LEYT…LAIF), 126-146 (ALFI…RLIF), 176-196 (MFLM…LYFL), 224-244 (ITLP…IIGG), and 281-301 (MGYG…VSLI). One can recognise an ABC transmembrane type-1 domain in the interval 87-302 (LWNTLEYTFW…IVILVVSLIS (216 aa)).

This sequence belongs to the binding-protein-dependent transport system permease family. MalFG subfamily. In terms of assembly, the complex is composed of two ATP-binding proteins (MsmX), two transmembrane proteins (AraP and AraQ) and a solute-binding protein (AraN).

The protein localises to the cell membrane. In terms of biological role, part of the ABC transporter complex AraNPQ involved in the uptake of arabinooligosaccharides. Transports alpha-1,5-arabinooligosaccharides, at least up to four L-arabinosyl units. Responsible for the translocation of the substrate across the membrane. The chain is Arabinooligosaccharides transport system permease protein AraP from Bacillus subtilis (strain 168).